Here is a 215-residue protein sequence, read N- to C-terminus: uncharacterized protein (215 aa).

Helical transmembrane passes span 3–23 (LLAY…LRSI), 30–50 (ANLL…GLTW), 59–79 (LGLS…LRFW), 87–107 (WGTY…AICV), 122–142 (VSTC…SNIY), and 156–176 (VLFG…LIYV).

Belongs to the major facilitator superfamily. Allantoate permease family.

It localises to the membrane. This is an uncharacterized protein from Saccharomyces cerevisiae (strain ATCC 204508 / S288c) (Baker's yeast).